The primary structure comprises 132 residues: Interleukin-13 (132 aa).

A signal peptide spans 1–18 (MALLLTTVIALTCLGGFA). N-linked (GlcNAc...) asparagine glycosylation is found at N38, N49, N57, and N72. 2 cysteine pairs are disulfide-bonded: C48–C76 and C64–C90.

The protein belongs to the IL-4/IL-13 family. As to quaternary structure, interacts with IL13RA2.

The protein localises to the secreted. Cytokine that plays important roles in allergic inflammation and immune response to parasite infection. Synergizes with IL2 in regulating interferon-gamma synthesis. Stimulates B-cell proliferation, and activation of eosinophils, basophils, and mast cells. Plays an important role in controlling IL33 activity by modulating the production of transmembrane and soluble forms of interleukin-1 receptor-like 1/IL1RL1. Displays the capacity to antagonize Th1-driven proinflammatory immune response and downregulates synthesis of many proinflammatory cytokines including IL1, IL6, IL10, IL12 and TNF-alpha through a mechanism that partially involves suppression of NF-kappa-B. Also functions on nonhematopoietic cells, including endothelial cells where it induces vascular cell adhesion protein 1/VCAM1, which is important in the recruitment of eosinophils. Exerts its biological effects through its receptors which comprises the IL4R chain and the IL13RA1 chain, to activate JAK1 and TYK2, leading to the activation of STAT6. Aside from IL13RA1, another receptor IL13RA2 acts as a high affinity decoy for IL13 and mediates internalization and depletion of extracellular IL13. The polypeptide is Interleukin-13 (IL13) (Pan troglodytes (Chimpanzee)).